The following is a 385-amino-acid chain: Isocitrate dehydrogenase [NAD] subunit beta, mitochondrial (385 aa).

The N-terminal 34 residues, 1 to 34 (MAALSGVRWLTRALVSAGNPGAWRGLSTSAAAHA), are a transit peptide targeting the mitochondrion. Position 199 is an N6-acetyllysine (Lys199).

The protein belongs to the isocitrate and isopropylmalate dehydrogenases family. In terms of assembly, heterooligomer of subunits alpha (IDH3A), beta (IDH3B), and gamma (IDH3G) in the apparent ratio of 2:1:1. The heterodimer containing one IDH3A and one IDH3B subunit and the heterodimer containing one IDH3A and one IDH3G subunit assemble into a heterotetramer (which contains two subunits of IDH3A, one of IDH3B and one of IDH3G) and further into the heterooctamer.

Its subcellular location is the mitochondrion. Its activity is regulated as follows. The heterotetramer and the heterodimer composed of IDH3A and IDH3G subunits can be allosterically activated by citrate (CIT) or/and ADP, and the two activators can act independently or synergistically. The heterodimer composed of IDH3A and IDH3B subunits cannot be allosterically regulated and the allosteric regulation of the heterotetramer is through the IDH3G subunit and not the IDH3B subunit. The IDH3G subunit contains the allosteric site which consists of a CIT-binding site and an ADP-binding site, and the binding of CIT and ADP causes conformational changes at the allosteric site which are transmitted to the active site in the catalytic subunit (IDH3A) through a cascade of conformational changes at the heterodimer interface, leading to stabilization of the isocitrate-binding at the active site and thus activation of the enzyme. ATP can activate the heterotetramer and the heterodimer composed of IDH3A and IDH3G subunits at low concentrations but inhibits their activities at high concentrations, whereas ATP exhibits only inhibitory effect on the heterodimer composed of IDH3A and IDH3B subunits. Functionally, plays a structural role to facilitate the assembly and ensure the full activity of the enzyme catalyzing the decarboxylation of isocitrate (ICT) into alpha-ketoglutarate. The heterodimer composed of the alpha (IDH3A) and beta (IDH3B) subunits and the heterodimer composed of the alpha (IDH3A) and gamma (IDH3G) subunits, have considerable basal activity but the full activity of the heterotetramer (containing two subunits of IDH3A, one of IDH3B and one of IDH3G) requires the assembly and cooperative function of both heterodimers. This Macaca fascicularis (Crab-eating macaque) protein is Isocitrate dehydrogenase [NAD] subunit beta, mitochondrial (IDH3B).